The primary structure comprises 803 residues: Zinc finger X-linked protein ZXDB (803 aa).

Disordered stretches follow at residues methionine 1 to aspartate 91, glutamate 120 to threonine 140, and alanine 218 to glycine 260. Gly residues predominate over residues leucine 13–glycine 26. 10 C2H2-type zinc fingers span residues tyrosine 271–histidine 295, phenylalanine 304–histidine 328, phenylalanine 334–histidine 358, phenylalanine 364–histidine 386, tyrosine 393–histidine 417, phenylalanine 424–histidine 448, phenylalanine 454–histidine 478, phenylalanine 484–histidine 508, phenylalanine 514–histidine 538, and serine 547–histidine 572. A required for interaction with ZXDC region spans residues tyrosine 271–aspartate 577. Residues glutamine 576 to valine 703 are required for transcriptional activation.

This sequence belongs to the ZXD family. In terms of assembly, self-associates. Interacts with ZXDC and CIITA. As to expression, may be expressed in brain, heart, kidney, liver, lung, muscle and placenta.

It is found in the nucleus. Its function is as follows. Cooperates with CIITA to promote transcription of MHC class I and MHC class II genes. The polypeptide is Zinc finger X-linked protein ZXDB (ZXDB) (Homo sapiens (Human)).